Here is a 246-residue protein sequence, read N- to C-terminus: NAD-dependent protein deacetylase (246 aa).

One can recognise a Deacetylase sirtuin-type domain in the interval 1-246; that stretch reads MKKPDIQQLK…VIEEIVNSNS (246 aa). NAD(+) contacts are provided by alanine 25, phenylalanine 36, arginine 37, glutamine 106, isoleucine 108, aspartate 109, and histidine 124. Phenylalanine 36 lines the nicotinamide pocket. Residues isoleucine 108 and aspartate 109 each contribute to the nicotinamide site. Residue histidine 124 is the Proton acceptor of the active site. Zn(2+) contacts are provided by cysteine 132, cysteine 135, cysteine 152, and cysteine 155. Residues serine 193, serine 194, asparagine 216, and aspartate 233 each coordinate NAD(+).

Belongs to the sirtuin family. Class U subfamily. The cofactor is Zn(2+).

It is found in the cytoplasm. The catalysed reaction is N(6)-acetyl-L-lysyl-[protein] + NAD(+) + H2O = 2''-O-acetyl-ADP-D-ribose + nicotinamide + L-lysyl-[protein]. Functionally, NAD-dependent protein deacetylase which modulates the activities of several enzymes which are inactive in their acetylated form. In Staphylococcus epidermidis (strain ATCC 35984 / DSM 28319 / BCRC 17069 / CCUG 31568 / BM 3577 / RP62A), this protein is NAD-dependent protein deacetylase.